Here is a 608-residue protein sequence, read N- to C-terminus: MSILTYLEFHLYYTLPVLAALCWLLKPFHSQQDNLKYKFLMLMAASTASIWDNYIVYHRAWWYCPTCVVAVIGYVPLEEYMFFIIMTLMTVAFSNFVMRWHLHTFFIRPNTSWKQTLLVRLVPVSALLAITYHAWHLTLPNKPSFYGSCILWYACPVLAILWLGAGEYILRRPVAVLLSIVIPSVYLCWADIVAISAGTWHISLRTSTGKMVVPDLPVEECLFFTLINTVLVFATCAIDRAQAILHLYKSSVQNQNPKQAISLFQHVKELAWAFCLPDQMLNNELFDDLTISWDILRKASKSFYTASAVFPSYVRQDLGVLYAFCRATDDLCDDESKSVQERRDQLDLTRQFVRDLFSQKTSAPIVIDWELYQNQLPASCISAFRAFTRLRHVLEVDPVEELLDGYKWDLERRPILDEQDLEAYSACVASSVGEMCTRVILAQDQKENDAWIIDRAREMGLVLQYVNIARDIVTDSETLGRCYLPQQWLRKEETEQIQQGNARSLGDQRLLGLSLKLVGKADAIMVRAKKGIDKLPANCQGGVRAACQVYAAIGSVLKQQKTTYPTRAHLKGSERAKIALLSVYNLYQSEDKPVALRQARKIKSFFVD.

Positions 1-240 are lycopene beta-cyclase; it reads MSILTYLEFH…LVFATCAIDR (240 aa). The next 7 helical transmembrane spans lie at 3–23, 37–56, 80–97, 117–137, 150–170, 175–195, and 218–238; these read ILTY…ALCW, YKFL…NYIV, YMFF…SNFV, LLVR…AWHL, ILWY…EYIL, AVLL…IVAI, and VEEC…TCAI. Residues 247-608 form a phytoene synthase region; that stretch reads LYKSSVQNQN…ARKIKSFFVD (362 aa).

In the N-terminal section; belongs to the lycopene beta-cyclase family. It in the C-terminal section; belongs to the phytoene/squalene synthase family.

The protein resides in the membrane. It catalyses the reaction all-trans-lycopene = gamma-carotene. The enzyme catalyses gamma-carotene = all-trans-beta-carotene. The catalysed reaction is 2 (2E,6E,10E)-geranylgeranyl diphosphate = 15-cis-phytoene + 2 diphosphate. It functions in the pathway carotenoid biosynthesis; beta-carotene biosynthesis. Its pathway is carotenoid biosynthesis; phytoene biosynthesis; all-trans-phytoene from geranylgeranyl diphosphate: step 1/1. In terms of biological role, bifunctional enzyme that catalyzes the reactions from geranylgeranyl diphosphate to phytoene (phytoene synthase) and lycopene to beta-carotene via the intermediate gamma-carotene (lycopene cyclase). In Blakeslea trispora (Choanephora trispora), this protein is Bifunctional lycopene cyclase/phytoene synthase.